An 807-amino-acid polypeptide reads, in one-letter code: Mechanosensitive cation channel TMEM63A (807 aa).

Topologically, residues 1-51 are extracellular; it reads MMDSPFLELWQSKAVSIREQLGLGDRPNDSYCYNSAKNSTVLQGVTFGGIP. N-linked (GlcNAc...) asparagine glycosylation is present at Asn-38. A helical transmembrane segment spans residues 52-74; the sequence is TVLLIDVSCFLFLILVFSIIRRR. Topologically, residues 75 to 134 are cytoplasmic; the sequence is FWDYGRIALVSEADSESRFQRLSSTSSSGQQDFENELGCCPWLTAIFRLHDDQILEWCGE. Residues 135-167 form a helical membrane-spanning segment; sequence DAIHYLSFQRHIIFLLVVVSFLSLCVILPVNLS. The Extracellular portion of the chain corresponds to 168-191; sequence GDLLDKDPYSFGRTTIANLQTDND. The helical transmembrane segment at 192-217 threads the bilayer; it reads LLWLHTIFAVIYLFLTVGFMRHHTQS. At 218 to 416 the chain is on the cytoplasmic side; the sequence is IKYKEENLVR…CWKNLSIQGL (199 aa). The intracellular linker IL2; confers mechanosensitivity stretch occupies residues 219–414; that stretch reads KYKEENLVRR…DICWKNLSIQ (196 aa). The chain crosses the membrane as a helical span at residues 417-444; it reads RWWLQWLGINFTLFLGLFFLTTPSIILS. Residues 445–462 are Extracellular-facing; the sequence is TMDKFNVTKPIHALNNPI. An N-linked (GlcNAc...) asparagine glycan is attached at Asn-450. A helical transmembrane segment spans residues 463–490; it reads ISQFFPTLLLWSFSALLPSIVYYSTLLE. The Cytoplasmic portion of the chain corresponds to 491-495; that stretch reads SHWTK. Residues 496 to 532 traverse the membrane as a helical segment; that stretch reads SGENQIMMTKVYIFLIFMVLILPSLGLTSLDFFFRWL. Residues 533 to 554 lie on the Extracellular side of the membrane; the sequence is FDKTSSEASIRLECVFLPDQGA. Residues 555–586 traverse the membrane as a helical segment; sequence FFVNYVIASAFIGNGMELLRLPGLILYTFRMI. The interval 555–586 is gating helix; it reads FFVNYVIASAFIGNGMELLRLPGLILYTFRMI. At 587-606 the chain is on the cytoplasmic side; it reads MAKTAADRRNVKQNQAFQYE. A helical membrane pass occupies residues 607–624; the sequence is FGAMYAWMLCVFTVIVAY. Over 625–628 the chain is Extracellular; the sequence is SITC. Residues 629 to 651 form a helical membrane-spanning segment; sequence PIIAPFGLIYILLKHMVDRHNLY. Residues 652-661 are Cytoplasmic-facing; sequence FVYLPAKLEK. A helical transmembrane segment spans residues 662–689; sequence GIHFAAVNQALAAPILCLFWLYFFSFLR. Residues 690 to 694 are Extracellular-facing; it reads LGMKA. Residues 695–709 form a helical membrane-spanning segment; the sequence is PATLFTFLVLLLTIL. Residues 710–807 lie on the Cytoplasmic side of the membrane; that stretch reads VCLAHTCFGC…GSVAAAPQEA (98 aa). Ser-739 is subject to Phosphoserine.

This sequence belongs to the CSC1 (TC 1.A.17) family. In terms of assembly, monomer. In terms of processing, N-Glycosylated.

It is found in the lysosome membrane. The protein localises to the early endosome membrane. Its subcellular location is the cell membrane. The catalysed reaction is Ca(2+)(in) = Ca(2+)(out). Functionally, mechanosensitive cation channel with low conductance and high activation threshold. In contrast to TMEM63B, does not show phospholipid scramblase activity. Acts as a regulator of lysosomal morphology by mediating lysosomal mechanosensitivity. Important for the baby's first breath and respiration throughout life. Upon lung inflation conducts cation currents in alveolar type 1 and 2 cells triggering lamellar body exocytosis and surfactant secretion into airspace. Also acts as an osmosensitive cation channel preferentially activated by hypotonic stress. This Homo sapiens (Human) protein is Mechanosensitive cation channel TMEM63A.